The following is a 131-amino-acid chain: Protein FAM107B (131 aa).

A2 carries the post-translational modification N-acetylalanine. Disordered regions lie at residues 39–78 (MNQKRGLAPQNKPELQKVMEKRKRDQVIKQKEEEAQKKKS) and 100–131 (KLQEEQENAPEFVKVKGNLRRTGQEVAQAQES). K50 carries the post-translational modification N6-acetyllysine. Positions 52-78 (ELQKVMEKRKRDQVIKQKEEEAQKKKS) are enriched in basic and acidic residues. Residues 61–112 (KRDQVIKQKEEEAQKKKSDLEIELLKRQQKLEQLELEKQKLQEEQENAPEFV) adopt a coiled-coil conformation.

The protein belongs to the FAM107 family.

This chain is Protein FAM107B, found in Homo sapiens (Human).